A 3931-amino-acid chain; its full sequence is Replicase polyprotein 1ab (3931 aa).

Residues 8 to 28 form a C4-type; atypical zinc finger; that stretch reads CTCTPNARVFVAEGQVYCTRC. Residues 69–182 form a PCP1-alpha region; sequence ECSPAGACWL…FCPFECAMAD (114 aa). Active-site for nsp1-alpha papain-like cysteine proteinase activity residues include Cys76 and His146. Residues 199–200 form an important for host EIF2AK2 inhibition region; sequence VS. Residues Cys270 and His339 each act as for nsp1-beta papain-like cysteine proteinase activity in the active site. The OTU-like stretch occupies residues 426–513; it reads LKRYSPPAEG…GEHWTVSVIP (88 aa). A Peptidase C33 domain is found at 428–536; that stretch reads RYSPPAEGNC…GCCEHKGGLV (109 aa). Active-site for nsp2 cysteine proteinase activity residues include Cys437 and His506. Disordered stretches follow at residues 809-868 and 1118-1164; these read RWTP…VGGP and TDEL…TGGV. Pro residues predominate over residues 810 to 819; the sequence is WTPPPPPPRV. Over residues 1139-1151 the composition is skewed to basic and acidic residues; sequence PAKDPRMSPRESD. 3 helical membrane-spanning segments follow: residues 1221 to 1241, 1266 to 1286, and 1339 to 1359; these read SGYS…LFLC, GVFG…SDPV, and WHFL…AYVL. The segment at 1236-1359 is HD1; the sequence is FCLFLCYSYP…DCILAGAYVL (124 aa). The interval 1414–1438 is WCCH; the sequence is TGWRGCWTGRSPIEQPSEKPIAFAQ. 5 consecutive transmembrane segments (helical) span residues 1554 to 1574, 1607 to 1627, 1629 to 1649, 1659 to 1679, and 1695 to 1715; these read IAAL…VYVT, LCIS…GFGL, EIAL…RLSC, AIAS…PCWL, and FLIS…VSLW. An HD2 region spans residues 1554 to 1715; that stretch reads IAALHVACSM…LAVVLLVSLW (162 aa). Residues His1818, Asp1843, and Ser1897 each act as charge relay system; for serine protease nsp4 activity in the active site. 4 consecutive transmembrane segments (helical) span residues 2006–2026, 2030–2050, 2064–2084, and 2107–2127; these read WTPL…AVLV, FSFG…VLMI, LGFY…VTQG, and SPVP…LYLF. Residues 2006-2127 are HD3; the sequence is WTPLVAVGFF…HLLAIILYLF (122 aa).

This sequence belongs to the arteriviridae polyprotein family. Nsp1-alpha papain-like: Interacts with host RNF31. In terms of assembly, interacts with host EIF2AK2; this interaction occurs in host stress granules and leads to EIF2AK2 inhibition. Interacts with host G3BP1; this interaction probably plays a role in Nsp1-beta-mediated inhibition of host EIF2AK2. As to quaternary structure, interacts with host DDX18; this interaction redistributes host DDX18 to the cytoplasm. Interacts with host IFITM1. In terms of assembly, interacts with host DDX5. As to quaternary structure, interacts with host OTULIN. Interacts with host LGALS3. In terms of processing, specific enzymatic cleavages in vivo by its own proteases yield mature proteins. Nsp1 is autocleaved into two subunits, Nsp1-alpha and Nsp1-beta. There are two alternative pathways for processing. Either nsp4-5 is cleaved, which represents the major pathway or the nsp5-6 and nsp6-7 are processed, which represents the minor pathway. The major pathway occurs when nsp2 acts as a cofactor for nsp4.

The protein localises to the host nucleus. The protein resides in the host cytoplasm. It localises to the host membrane. Its subcellular location is the host endoplasmic reticulum. It is found in the host perinuclear region. The catalysed reaction is RNA(n) + a ribonucleoside 5'-triphosphate = RNA(n+1) + diphosphate. It carries out the reaction ATP + H2O = ADP + phosphate + H(+). The enzyme catalyses Thiol-dependent hydrolysis of ester, thioester, amide, peptide and isopeptide bonds formed by the C-terminal Gly of ubiquitin (a 76-residue protein attached to proteins as an intracellular targeting signal).. It catalyses the reaction uridylyl-uridylyl-ribonucleotide-RNA = a 3'-end uridylyl-2',3'-cyclophospho-uridine-RNA + a 5'-end dephospho-ribonucleoside-RNA. Functionally, contains the activities necessary for the transcription of negative stranded RNA, leader RNA, subgenomic mRNAs and progeny virion RNA as well as proteinases responsible for the cleavage of the polyprotein into functional products. Its function is as follows. Inhibits host IFN-beta production. Plays a role in the degradation of the host transcriptional activator CREBBP protein. The degradation of host CREBBP which is a key component of the IFN enhanceosome is likely responsible for the inhibition of interferon mediated by Nsp1-alpha. Also participates in the inhibition of host NF-kappa-B activation by counteracting LUBAC-dependent induction of NF-kappa-B. Reduces host NEMO ubiquitination by blocking the interaction between the two LUBAC complex components RNF31 and SHARPIN. Plays a role in blocking host mRNA nuclear export to the cytoplasm and subversion of host protein synthesis. Additionally, inhibits the interferon-activated JAK/STAT signal transduction by mediating the ubiquitination and subsequent proteasomal degradation of host KPNA1. Repurposes the host antiviral stress granules into a proviral platform to counteract the EIF2AK2/PKR restriction, thereby regulating the host inflammatory response. In terms of biological role, multifunctional protein that acts as a viral protease and as a viral antagonist of host immune response. Cleaves the nsp2/nsp3 site in the viral polyprotein. Displays deubiquitinating activity that cleaves both ubiquitinated and ISGylated products and therefore inhibits ubiquitin and ISG15-dependent host innate immunity. Also deubiquinates host NFKBIA, thereby interfering with NFKBIA degradation and impairing subsequent NF-kappa-B activation. Functionally, plays a role in the inhibition of the immune response by interacting with host IFITM1. This interaction leads to the proteasomal degradation of the IFN-induced antiviral protein IFITM1. Its function is as follows. Cleaves the majority of cleavage sites present in the C-terminus of the polyprotein. Triggers host apoptosis through caspase-3, -8, and -9 activations. Subverts host innate immune responses through its protease activity. Targets the NF-kappa-B essential modulator NEMO and mediates its cleavage. Blocks host interferon beta induction and downstream signaling by cleaving mitochondrial MAVS, dislodging it from the mitochondria. Impairs host defense by cleaving host mRNA-decapping enzyme DCP1A to attenuate its antiviral activity. Plays a role in the initial induction of autophagosomes from host endoplasmic reticulum. In terms of biological role, plays a role in the inhibition of host STAT3 signaling pathway by inducing the degradation of STAT3. Functionally, responsible for replication and transcription of the viral RNA genome. Its function is as follows. Displays RNA and DNA duplex-unwinding activities with 5' to 3' polarity. Plays a role in viral transcription/replication and prevents the simultaneous activation of host cell dsRNA sensors, such as MDA5/IFIH1, OAS, PKR and NLRP3 inflammasome. Acts by degrading the 5'-polyuridines generated during replication of the poly(A) region of viral genomic and subgenomic RNAs. Catalyzes a two-step reaction in which a 2'3'-cyclic phosphate (2'3'-cP) is first generated by 2'-O transesterification, which is then hydrolyzed to a 3'-phosphate (3'-P). If not degraded, poly(U) RNA would hybridize with poly(A) RNA tails and activate host dsRNA sensors. Also plays a role in the inhibition of host type I interferon production by recruiting host OTULIN to promote removal of linear ubiquitination targeting host NEMO. This chain is Replicase polyprotein 1ab, found in Porcine reproductive and respiratory syndrome virus (PRRSV).